The primary structure comprises 319 residues: uncharacterized protein (319 aa).

The signal sequence occupies residues 1–23 (MFPFRRNVLAFAALLALSSPVLA).

This sequence to H.influenzae HI_0755.

This is an uncharacterized protein from Escherichia coli (strain K12).